The chain runs to 254 residues: Probable electron transfer flavoprotein subunit beta (254 aa).

The protein belongs to the ETF beta-subunit/FixA family. In terms of assembly, heterodimer of an alpha and a beta subunit. FAD is required as a cofactor. AMP serves as cofactor.

The protein resides in the mitochondrion matrix. The electron transfer flavoprotein serves as a specific electron acceptor for several dehydrogenases, including five acyl-CoA dehydrogenases, glutaryl-CoA and sarcosine dehydrogenase. It transfers the electrons to the main mitochondrial respiratory chain via ETF-ubiquinone oxidoreductase (ETF dehydrogenase). This is Probable electron transfer flavoprotein subunit beta from Schizosaccharomyces pombe (strain 972 / ATCC 24843) (Fission yeast).